Consider the following 378-residue polypeptide: uncharacterized protein (378 aa).

This sequence belongs to the IIV-6 329R family.

This is an uncharacterized protein from Acheta domesticus (House cricket).